Here is a 410-residue protein sequence, read N- to C-terminus: Mating-type locus allele B4 protein (410 aa).

Residues 1–110 (MSSDPKISIT…ANASSPVVGC (110 aa)) are variable domain between B alleles. Residues 107–184 (VVGCRELSED…NARRRSGWSH (78 aa)) constitute a DNA-binding region (homeobox; TALE-type). A highly conserved between B alleles region spans residues 111–410 (RELSEDLPAY…PFLCLSVAFV (300 aa)). Disordered stretches follow at residues 202 to 241 (RAKL…TPAD), 278 to 335 (TPKP…TPEL), and 375 to 394 (RGNR…QPDE). The span at 206-222 (SSSNQSTPPSPTSEYPS) shows a compositional bias: low complexity. The Nuclear localization signal signature appears at 276-308 (KKTPKPGMPRPVTTVAKRQPARKTKPAAKPKSR). Basic residues predominate over residues 294 to 307 (QPARKTKPAAKPKS). Residues 312–335 (PRASTTPSIDSTLDSSKLESTPEL) are compositionally biased toward polar residues. The not essential for B4 function stretch occupies residues 333–410 (PELSMCSTAD…PFLCLSVAFV (78 aa)). The segment covering 375–388 (RGNRKVKALPKRAG) has biased composition (basic residues).

This sequence belongs to the TALE/M-ATYP homeobox family.

It localises to the nucleus. The B locus has at least 25 alleles, and any combination of two different B alleles yields a multimeric regulatory protein, that activates genes responsible for the pathogenicity and for the sexual development of the fungus within the corn plant. The sequence is that of Mating-type locus allele B4 protein from Mycosarcoma maydis (Corn smut fungus).